Reading from the N-terminus, the 568-residue chain is Lipoprotein LpqB (568 aa).

The first 23 residues, 1 to 23, serve as a signal peptide directing secretion; the sequence is MSKISTKLKALSAVLSVTTLVAG. Cys-24 carries N-palmitoyl cysteine lipidation. A lipid anchor (S-diacylglycerol cysteine) is attached at Cys-24.

The protein belongs to the LpqB lipoprotein family.

It localises to the cell membrane. In Corynebacterium glutamicum (strain R), this protein is Lipoprotein LpqB.